A 510-amino-acid polypeptide reads, in one-letter code: Histidine ammonia-lyase (510 aa).

A cross-link (5-imidazolinone (Ala-Gly)) is located at residues 143-145; the sequence is ASG. The residue at position 144 (S144) is a 2,3-didehydroalanine (Ser).

It belongs to the PAL/histidase family. Post-translationally, contains an active site 4-methylidene-imidazol-5-one (MIO), which is formed autocatalytically by cyclization and dehydration of residues Ala-Ser-Gly.

The protein resides in the cytoplasm. The enzyme catalyses L-histidine = trans-urocanate + NH4(+). It functions in the pathway amino-acid degradation; L-histidine degradation into L-glutamate; N-formimidoyl-L-glutamate from L-histidine: step 1/3. This is Histidine ammonia-lyase from Psychromonas ingrahamii (strain DSM 17664 / CCUG 51855 / 37).